Here is a 425-residue protein sequence, read N- to C-terminus: UPF0229 protein YE2273 (425 aa).

The disordered stretch occupies residues 84–110 (TNDRIERPQGGGGGSGSGQGNAGQDGE). Positions 92 to 108 (QGGGGGSGSGQGNAGQD) are enriched in gly residues.

This sequence belongs to the UPF0229 family.

In Yersinia enterocolitica serotype O:8 / biotype 1B (strain NCTC 13174 / 8081), this protein is UPF0229 protein YE2273.